The primary structure comprises 377 residues: Prostaglandin reductase-3 (377 aa).

The residue at position 35 (lysine 35) is an N6-acetyllysine. Residues threonine 185, serine 205, lysine 209, tyrosine 224, serine 247, isoleucine 269, and tyrosine 275 each contribute to the NADP(+) site. Phosphoserine is present on serine 299. Residues 303 to 305 (FFL) and asparagine 361 each bind NADP(+).

It belongs to the zinc-containing alcohol dehydrogenase family. Quinone oxidoreductase subfamily.

It localises to the peroxisome. It carries out the reaction 13,14-dihydro-15-oxo-prostaglandin E2 + NADP(+) = 15-oxoprostaglandin E2 + NADPH + H(+). It catalyses the reaction 13,14-dihydro-15-oxo-prostaglandin E1 + NADP(+) = 15-oxoprostaglandin E1 + NADPH + H(+). The catalysed reaction is 13,14-dihydro-15-oxo-PGF2alpha + NADP(+) = 15-oxoprostaglandin F2alpha + NADPH + H(+). The enzyme catalyses 13,14-dihydro-15-oxo-prostaglandin F1alpha + NADP(+) = 15-oxoprostaglandin F1alpha + NADPH + H(+). Functions as 15-oxo-prostaglandin 13-reductase and acts on 15-keto-PGE1, 15-keto-PGE2, 15-keto-PGE1-alpha and 15-keto-PGE2-alpha with highest efficiency towards 15-keto-PGE2-alpha. Overexpression represses transcriptional activity of PPARG and inhibits adipocyte differentiation. This Bos taurus (Bovine) protein is Prostaglandin reductase-3 (PTGR3).